The sequence spans 519 residues: Acetylcholine receptor subunit gamma (519 aa).

An N-terminal signal peptide occupies residues 1–22; that stretch reads MHGGQGPQLLLLLLATCLGAQS. At 23–240 the chain is on the extracellular side; sequence RNQEERLLAD…VVFYLLIQRK (218 aa). N-linked (GlcNAc...) asparagine glycosylation is found at N52 and N163. C150 and C164 are oxidised to a cystine. Helical transmembrane passes span 241-265, 274-292, and 308-329; these read PLFY…IYFL, CTVA…FLVA, and YLTF…VLNV. At 330-476 the chain is on the cytoplasmic side; it reads SLRSPHTHSM…WLLVGRVLDR (147 aa). The chain crosses the membrane as a helical span at residues 477–497; that stretch reads VCFLAMLSLFICGTAGIFLMA.

This sequence belongs to the ligand-gated ion channel (TC 1.A.9) family. Acetylcholine receptor (TC 1.A.9.1) subfamily. Gamma/CHRNG sub-subfamily. Pentamer of two alpha chains, and one each of the beta, delta, and gamma (in immature muscle) or epsilon (in mature muscle) chains.

Its subcellular location is the postsynaptic cell membrane. It localises to the cell membrane. The catalysed reaction is K(+)(in) = K(+)(out). It catalyses the reaction Na(+)(in) = Na(+)(out). Its function is as follows. After binding acetylcholine, the AChR responds by an extensive change in conformation that affects all subunits and leads to opening of an ion-conducting channel across the plasma membrane. This chain is Acetylcholine receptor subunit gamma (Chrng), found in Rattus norvegicus (Rat).